The primary structure comprises 317 residues: Orange carotenoid-binding protein (317 aa).

Residues 18–169 (ADVVPATIAR…DMGFDTSKLG (152 aa)) form the OCP N-terminal domain. Residues Leu37, Tyr203, and Trp290 each coordinate 3'-hydroxyechinenone.

Belongs to the orange carotenoid-binding protein family. As to quaternary structure, homodimer. Requires 3'-hydroxyechinenone as cofactor. Proteolytically cleaved into a red 16.7 kDa form named red carotenoid-binding protein (RCP) which lacks 15 residues from the N-terminus and approximately 150 residues from the C-terminus.

It localises to the cellular thylakoid membrane. In terms of biological role, acts as a blue-light photoreceptor and photo-protectant. Essential for inhibiting damaged induced by excess blue-green light via a process known as non-photochemical quenching (NPQ). Binding carotenoids improves OCP's intrinsic photoprotectant activity by broadening its absorption spectrum and facilitating the dissipation of absorbed energy. In the dark or dim light the stable inactive form (OCP-O) is orange, upon illumination with blue-green light it converts to a metastable active red form (OCP-R), inducing energy dissipation, quenching cellular fluorescence via NPQ. This Limnospira maxima (Arthrospira maxima) protein is Orange carotenoid-binding protein.